Here is a 130-residue protein sequence, read N- to C-terminus: Methylglyoxal synthase (130 aa).

The region spanning 1-130 (MSTPRIALIA…DLARRLTANA (130 aa)) is the MGS-like domain. Residues H11, K15, 37–40 (TGTT), and 57–58 (SG) contribute to the substrate site. The active-site Proton donor/acceptor is D63. Residue H90 coordinates substrate.

This sequence belongs to the methylglyoxal synthase family.

The enzyme catalyses dihydroxyacetone phosphate = methylglyoxal + phosphate. In terms of biological role, catalyzes the formation of methylglyoxal from dihydroxyacetone phosphate. This is Methylglyoxal synthase from Burkholderia mallei (strain NCTC 10247).